A 519-amino-acid polypeptide reads, in one-letter code: GTPase Der (519 aa).

Composition is skewed to acidic residues over residues 1 to 12 and 30 to 54; these read MDVEGAFADEEE and GYED…PDFG. A disordered region spans residues 1 to 54; that stretch reads MDVEGAFADEEELAPHGGWASADFDPAEFGYEDSDDDFDAEDFDETEFSNPDFG. 2 consecutive EngA-type G domains span residues 81–244 and 254–427; these read CTVA…PEEP and RRVA…DNWD. GTP is bound by residues 87–94, 134–138, 196–199, 260–267, 307–311, and 372–375; these read GRPNVGKS, DTGGW, NKFD, GKPNVGKS, DTAGL, and NKWD. In terms of domain architecture, KH-like spans 428–510; sequence RRISTGQLNT…PVRIAVRVRE (83 aa).

The protein belongs to the TRAFAC class TrmE-Era-EngA-EngB-Septin-like GTPase superfamily. EngA (Der) GTPase family. In terms of assembly, associates with the 50S ribosomal subunit.

In terms of biological role, GTPase that plays an essential role in the late steps of ribosome biogenesis. This Corynebacterium glutamicum (strain ATCC 13032 / DSM 20300 / JCM 1318 / BCRC 11384 / CCUG 27702 / LMG 3730 / NBRC 12168 / NCIMB 10025 / NRRL B-2784 / 534) protein is GTPase Der.